The sequence spans 393 residues: GTP exchange factor for ARFs 1 (393 aa).

Polar residues predominate over residues 1 to 12; sequence MSSRYSERNGLS. Residues 1 to 21 form a disordered region; the sequence is MSSRYSERNGLSETEKMTLPK. Residues 12 to 54 adopt a coiled-coil conformation; it reads SETEKMTLPKVRKRKAQLVDEIEALKNEVREVDEELDQVYYTH. Positions 53–239 constitute an SEC7 domain; the sequence is THPKSKEYHK…TEVYESVSVT (187 aa). A PH domain is found at 261 to 377; the sequence is HAEREGWLFK…MRSWINAISR (117 aa).

Its function is as follows. Promotes guanine-nucleotide exchange on ARF. Promotes the activation of ARF through replacement of GDP with GTP. Plays a role in cell shedding during embryogenesis, probably by promoting the endocytosis of cell adhesion molecules. The sequence is that of GTP exchange factor for ARFs 1 (grp-1) from Caenorhabditis elegans.